The chain runs to 956 residues: MAM domain-containing glycosylphosphatidylinositol anchor protein 2 (956 aa).

The N-terminal stretch at 1–25 is a signal peptide; it reads MDLLYGLVWLLTVLLEGISGQGVYA. 2 consecutive Ig-like domains span residues 27–127 and 134–232; these read PTVR…IRVD and PVVT…KMVS. Disulfide bonds link cysteine 62/cysteine 110 and cysteine 159/cysteine 216. Asparagine 92, asparagine 213, and asparagine 237 each carry an N-linked (GlcNAc...) asparagine glycan. Ig-like domains lie at 242–328, 340–436, 442–533, and 540–627; these read PSIK…NIIV, PDPY…VNIS, PNLT…ALVQ, and PAVE…FLVT. 2 cysteine pairs are disulfide-bonded: cysteine 264–cysteine 310 and cysteine 359–cysteine 417. N-linked (GlcNAc...) asparagine glycosylation is found at asparagine 434, asparagine 443, asparagine 504, asparagine 610, and asparagine 703. 2 cysteine pairs are disulfide-bonded: cysteine 465–cysteine 515 and cysteine 561–cysteine 611. Residues 638-739 enclose the Fibronectin type-III domain; that stretch reads DTYNPVWQNR…IRVIKYSAPV (102 aa). The region spanning 746-921 is the MAM domain; sequence FHCGFEDGNI…VSIAEGECAK (176 aa). The GPI-anchor amidated aspartate moiety is linked to residue aspartate 931. Residues 932-956 constitute a propeptide, removed in mature form; it reads GAVGILVHIWLFPIIVLISILSPRR.

In terms of assembly, interacts (through the Ig-like domains) with NLGN2. Detected in Leydig cells, syncytiotrophoblast, duodenal villi epithelial cells and neutrophils from kidney and cutaneous squamous cell carcinoma (at protein level).

It localises to the cell membrane. In terms of biological role, may be involved in cell-cell interactions. This Homo sapiens (Human) protein is MAM domain-containing glycosylphosphatidylinositol anchor protein 2 (MDGA2).